A 205-amino-acid chain; its full sequence is Small ribosomal subunit protein uS4 (205 aa).

Residues Asn18–Leu45 form a disordered region. The 64-residue stretch at Arg94–Ser157 folds into the S4 RNA-binding domain.

Belongs to the universal ribosomal protein uS4 family. Part of the 30S ribosomal subunit. Contacts protein S5. The interaction surface between S4 and S5 is involved in control of translational fidelity.

Functionally, one of the primary rRNA binding proteins, it binds directly to 16S rRNA where it nucleates assembly of the body of the 30S subunit. With S5 and S12 plays an important role in translational accuracy. This is Small ribosomal subunit protein uS4 from Rhodopseudomonas palustris (strain BisA53).